The following is a 136-amino-acid chain: Peptide deformylase (136 aa).

Cys-85 and His-126 together coordinate Fe cation. Glu-127 is an active-site residue. His-130 is a binding site for Fe cation.

Belongs to the polypeptide deformylase family. It depends on Fe(2+) as a cofactor.

It carries out the reaction N-terminal N-formyl-L-methionyl-[peptide] + H2O = N-terminal L-methionyl-[peptide] + formate. Its function is as follows. Removes the formyl group from the N-terminal Met of newly synthesized proteins. Requires at least a dipeptide for an efficient rate of reaction. N-terminal L-methionine is a prerequisite for activity but the enzyme has broad specificity at other positions. This Clostridium beijerinckii (strain ATCC 51743 / NCIMB 8052) (Clostridium acetobutylicum) protein is Peptide deformylase.